The primary structure comprises 256 residues: 3-dehydroquinate dehydratase (256 aa).

Residues serine 19, 38–40 (EIR), and arginine 68 each bind 3-dehydroquinate. Histidine 122 (proton donor/acceptor) is an active-site residue. Lysine 147 acts as the Schiff-base intermediate with substrate in catalysis. 3-dehydroquinate contacts are provided by arginine 185, threonine 204, and glutamine 208.

The protein belongs to the type-I 3-dehydroquinase family. In terms of assembly, homodimer.

It carries out the reaction 3-dehydroquinate = 3-dehydroshikimate + H2O. It functions in the pathway metabolic intermediate biosynthesis; chorismate biosynthesis; chorismate from D-erythrose 4-phosphate and phosphoenolpyruvate: step 3/7. In terms of biological role, involved in the third step of the chorismate pathway, which leads to the biosynthesis of aromatic amino acids. Catalyzes the cis-dehydration of 3-dehydroquinate (DHQ) and introduces the first double bond of the aromatic ring to yield 3-dehydroshikimate. The chain is 3-dehydroquinate dehydratase from Methanospirillum hungatei JF-1 (strain ATCC 27890 / DSM 864 / NBRC 100397 / JF-1).